The primary structure comprises 710 residues: Probable thimet oligopeptidase (710 aa).

His-502 contributes to the Zn(2+) binding site. Glu-503 is a catalytic residue. A Zn(2+)-binding site is contributed by His-506.

Belongs to the peptidase M3 family. Zn(2+) is required as a cofactor.

It localises to the cytoplasm. The enzyme catalyses Preferential cleavage of bonds with hydrophobic residues at P1, P2 and P3' and a small residue at P1' in substrates of 5 to 15 residues.. Involved in cytoplasmic peptide degradation. This is Probable thimet oligopeptidase from Arabidopsis thaliana (Mouse-ear cress).